Reading from the N-terminus, the 196-residue chain is Probable inactive nicotinamidase At3g16190 (196 aa).

This sequence belongs to the isochorismatase family.

Its function is as follows. Does not possess nicotinamidase activity in vitro. This Arabidopsis thaliana (Mouse-ear cress) protein is Probable inactive nicotinamidase At3g16190.